The sequence spans 196 residues: uncharacterized protein (196 aa).

Positions 1–23 (MSARAPKELRLALPPCLLNRTFA) are cleaved as a signal peptide. Residues N19 and N26 are each glycosylated (N-linked (GlcNAc...) asparagine). Over 24–60 (SHNASGGSNAGIRSSGAGGGTCITQVGQQLFQSFSST) the chain is Extracellular. A helical membrane pass occupies residues 61–81 (LVLIVLVTLIFCLIVLSLSTF). Topologically, residues 82 to 196 (HIHKRRMKKR…EGLLQTVVLS (115 aa)) are cytoplasmic. Residues 93 to 184 (MQRAQEEYER…AHAASSCLDT (92 aa)) form a disordered region. Composition is skewed to basic and acidic residues over residues 95–106 (RAQEEYERDHCS) and 124–135 (HGKETRLERQPR). The span at 161 to 171 (CAPPPPPPVPS) shows a compositional bias: pro residues. Residues 172-181 (PHGAHAASSC) are compositionally biased toward low complexity.

It localises to the membrane. This is an uncharacterized protein from Rattus norvegicus (Rat).